The following is a 90-amino-acid chain: Cell division topological specificity factor 2 (90 aa).

The protein belongs to the MinE family.

In terms of biological role, prevents the cell division inhibition by proteins MinC and MinD at internal division sites while permitting inhibition at polar sites. This ensures cell division at the proper site by restricting the formation of a division septum at the midpoint of the long axis of the cell. The protein is Cell division topological specificity factor 2 of Syntrophomonas wolfei subsp. wolfei (strain DSM 2245B / Goettingen).